We begin with the raw amino-acid sequence, 182 residues long: MIRLYIQCLILWIIILPLLAAREGFGGRCLKPKDKGNRSCGRSQKYYYFNAEKGRCYRFTYYGCKGNSNRFKKKSDCVSSCACQAVLDHGSHCKSKAKRKEGSKVRYYFDSESGLCRKFWYVGCGGNHNKFTSKTSCKKVCVKDAPKRSKSSKPTSKTFSKNAQYSMNSLLRMLKNLSKKVM.

An N-terminal signal peptide occupies residues 1–20 (MIRLYIQCLILWIIILPLLA). 2 BPTI/Kunitz inhibitor domains span residues 29–81 (CLKP…VSSC) and 83–141 (CQAV…KKVC).

Nacreous layer of shell (at protein level). Expressed primarily in the mantle with highest level in the mantle pallium and lower level in the mantle edge.

It is found in the secreted. This Margaritifera margaritifera (Freshwater pearl mussel) protein is BPTI/Kunitz domain-containing protein 5.